The following is a 117-amino-acid chain: Large ribosomal subunit protein bL19 (117 aa).

It belongs to the bacterial ribosomal protein bL19 family.

This protein is located at the 30S-50S ribosomal subunit interface and may play a role in the structure and function of the aminoacyl-tRNA binding site. This is Large ribosomal subunit protein bL19 from Shewanella sediminis (strain HAW-EB3).